The primary structure comprises 289 residues: Ribosomal RNA small subunit methyltransferase A (289 aa).

Residues N21, L23, G48, E69, D94, and N120 each coordinate S-adenosyl-L-methionine.

It belongs to the class I-like SAM-binding methyltransferase superfamily. rRNA adenine N(6)-methyltransferase family. RsmA subfamily.

The protein localises to the cytoplasm. It catalyses the reaction adenosine(1518)/adenosine(1519) in 16S rRNA + 4 S-adenosyl-L-methionine = N(6)-dimethyladenosine(1518)/N(6)-dimethyladenosine(1519) in 16S rRNA + 4 S-adenosyl-L-homocysteine + 4 H(+). Specifically dimethylates two adjacent adenosines (A1518 and A1519) in the loop of a conserved hairpin near the 3'-end of 16S rRNA in the 30S particle. May play a critical role in biogenesis of 30S subunits. The polypeptide is Ribosomal RNA small subunit methyltransferase A (Actinobacillus pleuropneumoniae serotype 5b (strain L20)).